Consider the following 284-residue polypeptide: MNAWNTIYDQFNPIAFSLGSIEVHWYGLAYACAIVVAFYMALRMIQKDPKRFPIERKEFESYFLWAELGIVLGARVGYILIYEPNSSYYLTHFWQIFNPFDSHGNFVGIRGMSYHGGLVGFLIASYLYSRKDLKKLLIYLDLIAISLPLGYVFGRIGNFLNQELVGRIVPKDSHLGQIIGIMVDHQLRYPSQLIEAFLEGVIVFLMVMWAKKHTKTHGLLIVVYGLGYSLMRFIAEFYREPDSQMGVYFLNLSMGQILSLFMVIVSLGILLYATKNSKKIKENQ.

A run of 7 helical transmembrane segments spans residues 21–41, 62–82, 106–126, 136–156, 190–210, 218–238, and 252–272; these read IEVHWYGLAYACAIVVAFYMA, YFLWAELGIVLGARVGYILIY, FVGIRGMSYHGGLVGFLIASY, LLIYLDLIAISLPLGYVFGRI, PSQLIEAFLEGVIVFLMVMWA, GLLIVVYGLGYSLMRFIAEFY, and LSMGQILSLFMVIVSLGILLY. Arg155 is an a 1,2-diacyl-sn-glycero-3-phospho-(1'-sn-glycerol) binding site.

The protein belongs to the Lgt family.

Its subcellular location is the cell inner membrane. It catalyses the reaction L-cysteinyl-[prolipoprotein] + a 1,2-diacyl-sn-glycero-3-phospho-(1'-sn-glycerol) = an S-1,2-diacyl-sn-glyceryl-L-cysteinyl-[prolipoprotein] + sn-glycerol 1-phosphate + H(+). It functions in the pathway protein modification; lipoprotein biosynthesis (diacylglyceryl transfer). Functionally, catalyzes the transfer of the diacylglyceryl group from phosphatidylglycerol to the sulfhydryl group of the N-terminal cysteine of a prolipoprotein, the first step in the formation of mature lipoproteins. In Helicobacter pylori (strain P12), this protein is Phosphatidylglycerol--prolipoprotein diacylglyceryl transferase.